The primary structure comprises 502 residues: Probable cytosol aminopeptidase (502 aa).

Positions 254 and 259 each coordinate Mn(2+). The active site involves Lys-266. The Mn(2+) site is built by Asp-277, Asp-336, and Glu-338. The active site involves Arg-340.

This sequence belongs to the peptidase M17 family. Mn(2+) is required as a cofactor.

Its subcellular location is the cytoplasm. It catalyses the reaction Release of an N-terminal amino acid, Xaa-|-Yaa-, in which Xaa is preferably Leu, but may be other amino acids including Pro although not Arg or Lys, and Yaa may be Pro. Amino acid amides and methyl esters are also readily hydrolyzed, but rates on arylamides are exceedingly low.. It carries out the reaction Release of an N-terminal amino acid, preferentially leucine, but not glutamic or aspartic acids.. In terms of biological role, presumably involved in the processing and regular turnover of intracellular proteins. Catalyzes the removal of unsubstituted N-terminal amino acids from various peptides. The sequence is that of Probable cytosol aminopeptidase from Tropheryma whipplei (strain TW08/27) (Whipple's bacillus).